The sequence spans 402 residues: Protein HAIKU1 (402 aa).

Disordered stretches follow at residues 1–44, 63–135, 160–266, and 346–402; these read MDRP…LQTQ, TGSP…QQPM, SSLG…LVPS, and QPLT…WNDY. Residues 24-44 are compositionally biased toward polar residues; it reads LHQSTFAASTSNGAAPRLQTQ. The VQ motif lies at 55 to 64; the sequence is FRSIVQQLTG. The segment covering 76–87 has biased composition (polar residues); that stretch reads QNNSLRPQNTRL. A compositionally biased stretch (pro residues) spans 103–113; that stretch reads VPLPSMAPPQS. Residues 160-173 show a composition bias toward polar residues; it reads SSLGDSGPNANQMQ. Positions 218-240 are enriched in low complexity; sequence MPAQSQSQSQPQPQPQPQQHMMP. The segment covering 257-266 has biased composition (pro residues); it reads YLPPPGLVPS. The segment covering 349-358 has biased composition (polar residues); that stretch reads TPNFSFSQIA. Residues 371 to 380 are compositionally biased toward pro residues; that stretch reads QGPPQPPPSP. Low complexity predominate over residues 381–390; sequence GLMFPLSPSG.

As to quaternary structure, interacts with WRKY10. Interacts with MPK6.

It is found in the nucleus. Functionally, modulates seed size by negatively regulating the cellularization of syncytial endosperm. May function by binding and modulating the activity of WRKY10 transcription factor. The protein is Protein HAIKU1 of Arabidopsis thaliana (Mouse-ear cress).